The sequence spans 183 residues: Adenine phosphoribosyltransferase (183 aa).

The protein belongs to the purine/pyrimidine phosphoribosyltransferase family. As to quaternary structure, homodimer.

The protein localises to the cytoplasm. The catalysed reaction is AMP + diphosphate = 5-phospho-alpha-D-ribose 1-diphosphate + adenine. It functions in the pathway purine metabolism; AMP biosynthesis via salvage pathway; AMP from adenine: step 1/1. Catalyzes a salvage reaction resulting in the formation of AMP, that is energically less costly than de novo synthesis. In Salmonella gallinarum (strain 287/91 / NCTC 13346), this protein is Adenine phosphoribosyltransferase.